Here is a 205-residue protein sequence, read N- to C-terminus: Transcriptional regulator GfcR (205 aa).

The protein belongs to the purine/pyrimidine phosphoribosyltransferase family. GfcR subfamily.

The protein is Transcriptional regulator GfcR of Methanococcus maripaludis (strain C7 / ATCC BAA-1331).